We begin with the raw amino-acid sequence, 214 residues long: Thymidylate kinase (214 aa).

ATP is bound at residue 15 to 22; the sequence is GLEGAGKT.

Belongs to the thymidylate kinase family.

The catalysed reaction is dTMP + ATP = dTDP + ADP. Phosphorylation of dTMP to form dTDP in both de novo and salvage pathways of dTTP synthesis. In Haemophilus ducreyi (strain 35000HP / ATCC 700724), this protein is Thymidylate kinase.